The following is a 158-amino-acid chain: Protein GLUTAMINE DUMPER 1 (158 aa).

At 1–36 (MRPLSVQSKFEDVATSTSVNHHGVTPQSPWHSPVPY) the chain is on the extracellular side. A helical transmembrane segment spans residues 37–57 (LFGGLAAMLGLIAFALLILAC). The Cytoplasmic segment spans residues 58–158 (SYWRLSSSGE…DTGETTTTSH (101 aa)). A disordered region spans residues 65–85 (SGEEDGQNVDEEKESRSGDKA). The span at 66 to 76 (GEEDGQNVDEE) shows a compositional bias: acidic residues. The VIMAG motif lies at 96 to 100 (VIMAG). The tract at residues 126–158 (ISQEESVAKEEEKMREGEEEKVKDTGETTTTSH) is disordered. Basic and acidic residues predominate over residues 131–151 (SVAKEEEKMREGEEEKVKDTG).

Belongs to the GLUTAMINE DUMPER 1 (TC 9.B.60) family. In terms of assembly, interacts with LOG2. Post-translationally, ubiquitinated by LOG2 (in vitro). As to expression, expressed in the vascular tissues and in hydathodes. Expressed in the phloem and xylem (at the protein level).

The protein localises to the cell membrane. Its function is as follows. Probable subunit of an amino acid transporter involved in the regulation of the amino acid metabolism. Stimulates amino acid export by activating nonselective amino acid facilitators. Required the interaction with the RING-type E3 ubiquitin-protein ligase LOG2 to fulfill its function. Plays a role in the Gln export at hydathodes, at xylem parenchyma into xylem sap and from mesophyll into leaf apoplasm. Acts upstream genes involved in the salicylic acid (SA) pathway and in the geminivirus-host interaction. The polypeptide is Protein GLUTAMINE DUMPER 1 (GDU1) (Arabidopsis thaliana (Mouse-ear cress)).